The chain runs to 47 residues: Delta-halcutoxin-Hcg1a (47 aa).

Intrachain disulfides connect Cys-3/Cys-43, Cys-5/Cys-33, and Cys-26/Cys-44.

This sequence belongs to the sea anemone sodium channel inhibitory toxin family. Type II subfamily.

The protein localises to the secreted. The protein resides in the nematocyst. Functionally, is potently lethal to crabs, although it showed neither lethal activity in mice nor hemolytic activity. May bind to voltage-gated sodium channels (Nav), thereby delaying their inactivation during signal transduction. This Isohalcurias carlgreni (Sea anemone) protein is Delta-halcutoxin-Hcg1a.